The following is a 92-amino-acid chain: UPF0235 protein CCA_00247 (92 aa).

Belongs to the UPF0235 family.

In Chlamydia caviae (strain ATCC VR-813 / DSM 19441 / 03DC25 / GPIC) (Chlamydophila caviae), this protein is UPF0235 protein CCA_00247.